The sequence spans 236 residues: Small ribosomal subunit protein uS2c (236 aa).

The protein belongs to the universal ribosomal protein uS2 family.

It localises to the plastid. The protein localises to the chloroplast. This Calycanthus floridus var. glaucus (Eastern sweetshrub) protein is Small ribosomal subunit protein uS2c (rps2).